A 382-amino-acid polypeptide reads, in one-letter code: uncharacterized protein (382 aa).

12 consecutive transmembrane segments (helical) span residues Gly-14 to Ala-34, Met-45 to Ile-65, Leu-79 to Ala-99, Phe-102 to Ser-122, Leu-131 to Ser-151, Leu-157 to Phe-177, Leu-204 to Pro-224, Asn-236 to Gly-256, Leu-265 to His-285, Ala-289 to Trp-309, Ala-325 to Met-345, and Ser-349 to Leu-369.

The protein belongs to the major facilitator superfamily. YcaD (TC 2.A.1.26) family.

It is found in the cell inner membrane. This is an uncharacterized protein from Escherichia fergusonii (strain ATCC 35469 / DSM 13698 / CCUG 18766 / IAM 14443 / JCM 21226 / LMG 7866 / NBRC 102419 / NCTC 12128 / CDC 0568-73).